The primary structure comprises 1160 residues: Carbamoyl phosphate synthase arginine-specific large chain, mitochondrial (1160 aa).

Residues 81–478 (AEHEKVKKVV…SLQKALRQVD (398 aa)) form a carboxyphosphate synthetic domain region. ATP is bound by residues Arg208, Arg248, Gly254, Gly255, Lys285, Leu287, Glu292, Gly318, Ile319, His320, Gln361, and Glu375. Positions 212 to 404 (AKALNEINIP…LAYTAAKIAL (193 aa)) constitute an ATP-grasp 1 domain. The Mg(2+) site is built by Gln361, Glu375, and Asn377. Mn(2+)-binding residues include Gln361, Glu375, and Asn377. An oligomerization domain region spans residues 479–623 (PSFLGFMAMP…YTSYNASSHD (145 aa)). The segment at 624-1012 (IDFNEHGTMV…AYWAALQSTQ (389 aa)) is carbamoyl phosphate synthetic domain. The ATP-grasp 2 domain occupies 748 to 946 (SQILDKIGVD…FIDVATRSII (199 aa)). ATP-binding residues include Arg784, Lys823, Ile825, Glu830, Gly855, Val856, His857, Ser858, Gln898, and Glu917. Residues Gln898, Glu917, and Asn919 each contribute to the Mg(2+) site. Mn(2+) contacts are provided by Gln898, Glu917, and Asn919. The allosteric domain stretch occupies residues 1013 to 1144 (NFKIPLPGQG…PSVLSEKKEM (132 aa)). The 147-residue stretch at 1014–1160 (FKIPLPGQGI…WSEWIGSHDL (147 aa)) folds into the MGS-like domain.

The protein belongs to the CarB family. Heterodimer composed of 2 chains; the small (or glutamine) chain promotes the hydrolysis of glutamine to ammonia, which is used by the large (or ammonia) chain to synthesize carbamoyl phosphate. Requires Mg(2+) as cofactor. It depends on Mn(2+) as a cofactor.

The protein localises to the mitochondrion. It catalyses the reaction hydrogencarbonate + L-glutamine + 2 ATP + H2O = carbamoyl phosphate + L-glutamate + 2 ADP + phosphate + 2 H(+). The catalysed reaction is hydrogencarbonate + NH4(+) + 2 ATP = carbamoyl phosphate + 2 ADP + phosphate + 2 H(+). Its pathway is amino-acid biosynthesis; L-arginine biosynthesis; carbamoyl phosphate from bicarbonate: step 1/1. In terms of biological role, large subunit of the arginine-specific carbamoyl phosphate synthase (CPSase). CPSase catalyzes the formation of carbamoyl phosphate from the ammonia moiety of glutamine, hydrogencarbonate, and phosphate donated by ATP, the first step of the arginine biosynthetic pathway. The large subunit (synthetase) binds the substrates ammonia (free or transferred from glutamine from the small subunit), hydrogencarbonate and ATP and carries out an ATP-coupled ligase reaction, activating hydrogencarbonate by forming carboxy phosphate which reacts with ammonia to form carbamoyl phosphate. The chain is Carbamoyl phosphate synthase arginine-specific large chain, mitochondrial (arg4) from Schizosaccharomyces pombe (strain 972 / ATCC 24843) (Fission yeast).